A 151-amino-acid polypeptide reads, in one-letter code: Probable cGMP 3',5'-cyclic phosphodiesterase subunit delta (151 aa).

This sequence belongs to the PDE6D/unc-119 family. In terms of assembly, interacts with Pde6.

It is found in the nucleus. The protein resides in the cytoplasm. The protein is Probable cGMP 3',5'-cyclic phosphodiesterase subunit delta of Aedes aegypti (Yellowfever mosquito).